A 1521-amino-acid chain; its full sequence is Retroelement silencing factor 1 (1521 aa).

Lysine 223 participates in a covalent cross-link: Glycyl lysine isopeptide (Lys-Gly) (interchain with G-Cter in SUMO2). A disordered region spans residues 621 to 640 (EKQHKPIQGDPDIADSSLGK). Residue serine 910 is modified to Phosphoserine. Threonine 996 carries the post-translational modification Phosphothreonine. 2 stretches are compositionally biased toward polar residues: residues 1093–1105 (KNMPFSKQASQES) and 1124–1142 (LSSNTDPCRSNTSSVQSVS). 3 disordered regions span residues 1093 to 1147 (KNMP…EKKK), 1204 to 1230 (ERASVQEKTVPSPESSDPKGSSSKSTR), and 1312 to 1335 (EASRTHSVSNNNKGKFDGKQPDKM). Serine 1142 carries the phosphoserine modification. Residues 1214 to 1228 (PSPESSDPKGSSSKS) are compositionally biased toward low complexity. Positions 1325–1335 (GKFDGKQPDKM) are enriched in basic and acidic residues. Residue lysine 1411 forms a Glycyl lysine isopeptide (Lys-Gly) (interchain with G-Cter in SUMO2) linkage. 2 disordered regions span residues 1425–1444 (DKQDCPGPGPEKEQAPVQVS) and 1457–1485 (IPTRTKMPESSQRDSADSRLSKRSLSADE). Basic and acidic residues predominate over residues 1467–1476 (SQRDSADSRL). 2 positions are modified to phosphoserine: serine 1482 and serine 1514.

As to quaternary structure, interacts with SETDB1.

It localises to the nucleus. Its function is as follows. Plays a role in the regulation of imprinted gene expression, regulates repressive epigenetic modifications associated with SETDB1. Required for the recruitment or accumulation of SETDB1 to the endogenous retroviruses (ERVs) and maintenance of repressive chromatin configuration, contributing to a subset of the SETDB1-dependent ERV silencing in embryonic stem cells. The polypeptide is Retroelement silencing factor 1 (Mus musculus (Mouse)).